The following is a 345-amino-acid chain: Phosphoribosylformylglycinamidine cyclo-ligase (345 aa).

It belongs to the AIR synthase family.

It localises to the cytoplasm. It carries out the reaction 2-formamido-N(1)-(5-O-phospho-beta-D-ribosyl)acetamidine + ATP = 5-amino-1-(5-phospho-beta-D-ribosyl)imidazole + ADP + phosphate + H(+). The protein operates within purine metabolism; IMP biosynthesis via de novo pathway; 5-amino-1-(5-phospho-D-ribosyl)imidazole from N(2)-formyl-N(1)-(5-phospho-D-ribosyl)glycinamide: step 2/2. The chain is Phosphoribosylformylglycinamidine cyclo-ligase from Shewanella sp. (strain MR-7).